The chain runs to 719 residues: Capsid protein (719 aa).

The disordered stretch occupies residues 647–678; it reads GDALPSRERKRQAWQDSTSEETESEAEAQEEK. Over residues 664–674 the composition is skewed to acidic residues; that stretch reads TSEETESEAEA.

It belongs to the anelloviridae capsid protein family.

Its subcellular location is the virion. Functionally, self assemble to form an icosahedral capsid. This is Capsid protein from Torque teno virus (isolate Human/Germany/KAV/2001) (TTV).